Reading from the N-terminus, the 622-residue chain is MKTLLIHSDYLEFEAKEKTKIAEDADVLSGKMDECLTVFIAVEKDDESDPDAVVKNAVEEIVKTADNLKVKNVVVYPYAHLSSDLGSPATAKEILAEIEKELSGNYEVLRAPFGWYKAFKISCKGHPLSELSRKITTERKEEVKKEKVVSKFYIINGENLELTEVNDEVISKMEDKGLLALLKHELDIKEEGKENGEPPHVKYIKEKEICDYEPSSDAGHFRWYPKGKLIRDLLSDYVYNLVVERGGMPVETPVMYDLQNNAIREHADKFGERQYRFKQGNKDLMLRFAACFGQFMMKKDMYLLPKHMPLKLYELSTYSFRYEQRGELVGLKRLRAFTMPDMHTVCIDMKQAMEAFEDQLWMGLKTGDDFKTPYAIIFRFTEDFFEENKEWFFGMAKEYKQKYGKDAILEILPGRKHYWVGKVDMAVVDSFGRPIENPTVQIDVESAERFGIVVHDGDKKVHPIILHCSPTGSVERVLCGLLENAYLNTLENRPPALPTWLTPVQARVIPVGDKHSAFALDVATKLRASGIRADFDDREDSMGKKVRNAGTDWVNYVVVIGDSEMESGKLTVTVREESELKKAKKEELTVEELIEKITSDVKDAPKRPLPLPMKCSVQPIFR.

Residues 1–141 form an editing domain region; it reads MKTLLIHSDY…SRKITTERKE (141 aa). The interval 199 to 498 is catalytic; the sequence is PHVKYIKEKE…TLENRPPALP (300 aa). Zn(2+)-binding residues include Cys-291, His-343, and His-467.

The protein belongs to the class-II aminoacyl-tRNA synthetase family. In terms of assembly, homodimer. Zn(2+) is required as a cofactor.

The protein resides in the cytoplasm. The catalysed reaction is tRNA(Thr) + L-threonine + ATP = L-threonyl-tRNA(Thr) + AMP + diphosphate + H(+). In terms of biological role, catalyzes the attachment of threonine to tRNA(Thr) in a two-step reaction: L-threonine is first activated by ATP to form Thr-AMP and then transferred to the acceptor end of tRNA(Thr). Also edits incorrectly charged L-seryl-tRNA(Thr). The chain is Threonine--tRNA ligase from Methanococcus maripaludis (strain C6 / ATCC BAA-1332).